Reading from the N-terminus, the 168-residue chain is Phosphopantetheine adenylyltransferase (168 aa).

Residue T13 participates in substrate binding. Residues T13–F14 and H21 contribute to the ATP site. The substrate site is built by K45, L78, and R92. ATP is bound by residues G93–R95, E103, and T128–S134.

Belongs to the bacterial CoaD family. Homohexamer. Requires Mg(2+) as cofactor.

It is found in the cytoplasm. It catalyses the reaction (R)-4'-phosphopantetheine + ATP + H(+) = 3'-dephospho-CoA + diphosphate. Its pathway is cofactor biosynthesis; coenzyme A biosynthesis; CoA from (R)-pantothenate: step 4/5. Its function is as follows. Reversibly transfers an adenylyl group from ATP to 4'-phosphopantetheine, yielding dephospho-CoA (dPCoA) and pyrophosphate. The polypeptide is Phosphopantetheine adenylyltransferase (Wolbachia pipientis wMel).